A 943-amino-acid chain; its full sequence is Sodium- and chloride-dependent GABA transporter ine (943 aa).

The Cytoplasmic portion of the chain corresponds to 1–345 (MAENKDVSQV…RQQHWANKMQ (345 aa)). The segment at 103–122 (HKQSPLRHTSVRTRPSSEVL) is disordered. Helical transmembrane passes span 346–366 (FVLA…FPYM), 373–393 (GVFL…LLFM), and 418–438 (GAGL…SVII). Residues 439-510 (GYSIYYFFTS…GLEYPGMMRW (72 aa)) lie on the Extracellular side of the membrane. An N-linked (GlcNAc...) asparagine glycan is attached at Asn476. 9 helical membrane passes run 511 to 531 (ELFA…WKSI), 539 to 559 (YFTA…AVTL), 591 to 607 (FNSL…FASY), 618 to 638 (TVAV…FAFS), 679 to 699 (WAVM…FAIV), 723 to 743 (IVVL…IIQG), 754 to 774 (YAAS…IAWF), 799 to 819 (CWLV…LINY), and 836 to 856 (YGIG…YAVI). Topologically, residues 857 to 943 (NFLRSSGDTF…HAEAGGPCGQ (87 aa)) are cytoplasmic.

It belongs to the sodium:neurotransmitter symporter (SNF) (TC 2.A.22) family. In terms of tissue distribution, expressed both maternally and zygotically. Developing embryos exhibit expression in the posterior hindgut, foregut, midgut, Malpighian tubules, anal plate, Garland cells, and a subset of cells in the central nervous system. Central nervous system expression is seen in segmentally repeating in cells flanking the midline of the ventral ganglion. Isoform A and isoform B are colocalized in both the nervous system and the fluid reabsorption system.

Its subcellular location is the membrane. In terms of biological role, plays a role in neuronal membrane excitation, important for normal response properties of the photoreceptor. Able to control excitability from either neurons or glia cells. Ine negatively regulates neuronal sodium channels. Controls neurotransmitter-mediated signaling pathways associated with the structure of the larval peripheral nerve, ine and eag control perineurial glial growth through partially redundant pathways. Isoform A and isoform B are both functional, although isoform A functions with greater efficiency. Has a role in osmolyte transport within the Malpighian tubule and hindgut. The protein is Sodium- and chloride-dependent GABA transporter ine of Drosophila melanogaster (Fruit fly).